The primary structure comprises 260 residues: MQRNGLIGDTIRSLGFLSRLPLPQGWFDNTDDSLPRNARAFPLAGGILGLLAGVALLIANAISLPPLAAALIAIGALAAMTGALHEDGLGDTADGFFGASTPDRRLDIMKDSRIGTFAALTLVIWTGVKASLLMAIIARAGAGYALLALIGTEAASRAGMLAFWHALPSARPGGLADSMGQPQWETVVCGCGLGLALLAIGFLPSGGMVALINALVLMTVVLFGFARLCMAKIGGQTGDTLGAAQQIGSLAALIGLVMAL.

Helical transmembrane passes span 42-62, 64-84, 117-137, 144-164, 192-212, 214-234, and 240-260; these read PLAGGILGLLAGVALLIANAI, LPPLAAALIAIGALAAMTGAL, FAALTLVIWTGVKASLLMAII, YALLALIGTEAASRAGMLAFW, GLGLALLAIGFLPSGGMVALI, ALVLMTVVLFGFARLCMAKIG, and TLGAAQQIGSLAALIGLVMAL.

Belongs to the CobS family. It depends on Mg(2+) as a cofactor.

The protein localises to the cell inner membrane. The enzyme catalyses alpha-ribazole + adenosylcob(III)inamide-GDP = adenosylcob(III)alamin + GMP + H(+). The catalysed reaction is alpha-ribazole 5'-phosphate + adenosylcob(III)inamide-GDP = adenosylcob(III)alamin 5'-phosphate + GMP + H(+). It functions in the pathway cofactor biosynthesis; adenosylcobalamin biosynthesis; adenosylcobalamin from cob(II)yrinate a,c-diamide: step 7/7. Its function is as follows. Joins adenosylcobinamide-GDP and alpha-ribazole to generate adenosylcobalamin (Ado-cobalamin). Also synthesizes adenosylcobalamin 5'-phosphate from adenosylcobinamide-GDP and alpha-ribazole 5'-phosphate. The chain is Adenosylcobinamide-GDP ribazoletransferase from Brucella abortus (strain S19).